A 482-amino-acid polypeptide reads, in one-letter code: Cobyric acid synthase (482 aa).

The GATase cobBQ-type domain maps to 243–430 (ACKVVVPQLE…LHGLFTSDAF (188 aa)). The active-site Nucleophile is the C325. H422 is a catalytic residue.

It belongs to the CobB/CobQ family. CobQ subfamily.

It participates in cofactor biosynthesis; adenosylcobalamin biosynthesis. Catalyzes amidations at positions B, D, E, and G on adenosylcobyrinic A,C-diamide. NH(2) groups are provided by glutamine, and one molecule of ATP is hydrogenolyzed for each amidation. The protein is Cobyric acid synthase of Ruegeria sp. (strain TM1040) (Silicibacter sp.).